Reading from the N-terminus, the 471-residue chain is PTS system mannitol-specific EIICB component (471 aa).

Residues 1–29 (MTHTSENQAGFRVKIQRFGSYLSGMIMPN) lie on the Cytoplasmic side of the membrane. One can recognise a PTS EIIC type-2 domain in the interval 18 to 342 (FGSYLSGMIM…FFVASIFLKS (325 aa)). Residues 30–51 (IGAFIAWGIITALFIPTGWLPN) form a helical membrane-spanning segment. Residues 52-55 (ETFA) are Extracellular-facing. A helical transmembrane segment spans residues 56-76 (KLVGPMITYLLPLLIGYTGGK). At 77–139 (MIYDVRGGVV…QGFEMLVNNF (63 aa)) the chain is on the cytoplasmic side. Residues 140–161 (SAGIIGGLLTLAAFKGVGPVVS) traverse the membrane as a helical segment. Topologically, residues 162–170 (AISKTLAAG) are extracellular. A helical membrane pass occupies residues 171–191 (VEKIVDLHLLPLANIFIEPGK). The Cytoplasmic segment spans residues 192–278 (VLFLNNAINH…VLMRPILILA (87 aa)). A helical transmembrane segment spans residues 279–298 (AIAGGVSGVLTFTIFDAGLV). Topologically, residues 299 to 318 (AVPSPGSIFALLAMTPKGNY) are extracellular. The helical transmembrane segment at 319–340 (LGVLAGVLVATAVSFFVASIFL) threads the bilayer. Over 341-471 (KSAKNNEEDI…YDELIEMLKK (131 aa)) the chain is Cytoplasmic. Residues 383 to 471 (KKIVFACDAG…YDELIEMLKK (89 aa)) enclose the PTS EIIB type-2 domain. The active-site Phosphocysteine intermediate; for EIIB activity is the C389. Residue C389 is modified to Phosphocysteine; by EIIA.

Homodimer.

The protein resides in the cell membrane. It catalyses the reaction D-mannitol(out) + N(pros)-phospho-L-histidyl-[protein] = D-mannitol 1-phosphate(in) + L-histidyl-[protein]. Its function is as follows. The phosphoenolpyruvate-dependent sugar phosphotransferase system (sugar PTS), a major carbohydrate active transport system, catalyzes the phosphorylation of incoming sugar substrates concomitantly with their translocation across the cell membrane. The enzyme II CmtAB PTS system is involved in D-mannitol transport. The polypeptide is PTS system mannitol-specific EIICB component (Geobacillus stearothermophilus (Bacillus stearothermophilus)).